A 239-amino-acid chain; its full sequence is Large ribosomal subunit protein uL2 (239 aa).

Residues 200–239 (VNHPHGGKEHHIGRPSTVSRRAPPGRKVGHIAARRTGRRK) are disordered. Basic residues predominate over residues 222–239 (PPGRKVGHIAARRTGRRK).

It belongs to the universal ribosomal protein uL2 family. In terms of assembly, part of the 50S ribosomal subunit. Forms a bridge to the 30S subunit in the 70S ribosome.

Its function is as follows. One of the primary rRNA binding proteins. Required for association of the 30S and 50S subunits to form the 70S ribosome, for tRNA binding and peptide bond formation. It has been suggested to have peptidyltransferase activity; this is somewhat controversial. Makes several contacts with the 16S rRNA in the 70S ribosome. The sequence is that of Large ribosomal subunit protein uL2 from Thermococcus gammatolerans (strain DSM 15229 / JCM 11827 / EJ3).